The sequence spans 198 residues: Nucleoid occlusion factor SlmA (198 aa).

Residues R9–L70 form the HTH tetR-type domain. The segment at residues T33–F52 is a DNA-binding region (H-T-H motif). Positions A113 to K144 form a coiled coil.

Belongs to the nucleoid occlusion factor SlmA family. In terms of assembly, homodimer. Interacts with FtsZ.

Its subcellular location is the cytoplasm. It is found in the nucleoid. Its function is as follows. Required for nucleoid occlusion (NO) phenomenon, which prevents Z-ring formation and cell division over the nucleoid. Acts as a DNA-associated cell division inhibitor that binds simultaneously chromosomal DNA and FtsZ, and disrupts the assembly of FtsZ polymers. SlmA-DNA-binding sequences (SBS) are dispersed on non-Ter regions of the chromosome, preventing FtsZ polymerization at these regions. The chain is Nucleoid occlusion factor SlmA from Pectobacterium carotovorum subsp. carotovorum (strain PC1).